Consider the following 378-residue polypeptide: tRNA-specific 2-thiouridylase MnmA (378 aa).

ATP contacts are provided by residues 6-13 (AMSGGVDS) and Leu32. The active-site Nucleophile is Cys101. A disulfide bridge connects residues Cys101 and Cys199. Gly125 lines the ATP pocket. The interval 148 to 150 (KDQ) is interaction with tRNA. Residue Cys199 is the Cysteine persulfide intermediate of the active site.

It belongs to the MnmA/TRMU family.

It localises to the cytoplasm. It carries out the reaction S-sulfanyl-L-cysteinyl-[protein] + uridine(34) in tRNA + AH2 + ATP = 2-thiouridine(34) in tRNA + L-cysteinyl-[protein] + A + AMP + diphosphate + H(+). Functionally, catalyzes the 2-thiolation of uridine at the wobble position (U34) of tRNA, leading to the formation of s(2)U34. This is tRNA-specific 2-thiouridylase MnmA from Renibacterium salmoninarum (strain ATCC 33209 / DSM 20767 / JCM 11484 / NBRC 15589 / NCIMB 2235).